The sequence spans 258 residues: MISKETFEIFPSVDIVDGIAMTSNSAIRLTRGESSTLRRPLGTPAEVALAWQNAGAKWIHVVDLDAASGRGSNSHLIADVLAAVDINVQVCGGIRDETILRKVLATGCQRVNLGTAALENPDWCAQAIAEYGDKIAIALDVKSTSEGYQLATHGWNVSKGNLWDLLERLDKQGCQRYVVTDVERGGMMSSPNFTLLQEVCAKTSSPVIAGGGVSSLDDLRALADLSTIGVEGAILGQALHIGKVPLEDALAATQSPRR.

D14 functions as the Proton acceptor in the catalytic mechanism. D140 acts as the Proton donor in catalysis.

The protein belongs to the HisA/HisF family.

It is found in the cytoplasm. It carries out the reaction 1-(5-phospho-beta-D-ribosyl)-5-[(5-phospho-beta-D-ribosylamino)methylideneamino]imidazole-4-carboxamide = 5-[(5-phospho-1-deoxy-D-ribulos-1-ylimino)methylamino]-1-(5-phospho-beta-D-ribosyl)imidazole-4-carboxamide. The protein operates within amino-acid biosynthesis; L-histidine biosynthesis; L-histidine from 5-phospho-alpha-D-ribose 1-diphosphate: step 4/9. The sequence is that of 1-(5-phosphoribosyl)-5-[(5-phosphoribosylamino)methylideneamino] imidazole-4-carboxamide isomerase 2 (hisA2) from Photorhabdus laumondii subsp. laumondii (strain DSM 15139 / CIP 105565 / TT01) (Photorhabdus luminescens subsp. laumondii).